A 260-amino-acid polypeptide reads, in one-letter code: Indole-3-glycerol phosphate synthase (260 aa).

Belongs to the TrpC family.

The enzyme catalyses 1-(2-carboxyphenylamino)-1-deoxy-D-ribulose 5-phosphate + H(+) = (1S,2R)-1-C-(indol-3-yl)glycerol 3-phosphate + CO2 + H2O. It functions in the pathway amino-acid biosynthesis; L-tryptophan biosynthesis; L-tryptophan from chorismate: step 4/5. The protein is Indole-3-glycerol phosphate synthase of Bacteroides thetaiotaomicron (strain ATCC 29148 / DSM 2079 / JCM 5827 / CCUG 10774 / NCTC 10582 / VPI-5482 / E50).